Consider the following 144-residue polypeptide: Large ribosomal subunit protein uL16 (144 aa).

Positions 1–19 (MLLPKRVKYRRQHRPKTTG) are enriched in basic residues. The segment at 1–23 (MLLPKRVKYRRQHRPKTTGRSKG) is disordered.

Belongs to the universal ribosomal protein uL16 family. As to quaternary structure, part of the 50S ribosomal subunit.

Binds 23S rRNA and is also seen to make contacts with the A and possibly P site tRNAs. This Staphylococcus aureus (strain Mu50 / ATCC 700699) protein is Large ribosomal subunit protein uL16.